The primary structure comprises 283 residues: Elongation factor Ts (283 aa).

Residues Thr-80–Val-83 are involved in Mg(2+) ion dislocation from EF-Tu.

The protein belongs to the EF-Ts family.

The protein resides in the cytoplasm. In terms of biological role, associates with the EF-Tu.GDP complex and induces the exchange of GDP to GTP. It remains bound to the aminoacyl-tRNA.EF-Tu.GTP complex up to the GTP hydrolysis stage on the ribosome. This chain is Elongation factor Ts, found in Actinobacillus pleuropneumoniae serotype 5b (strain L20).